The sequence spans 521 residues: MQFSSVLPLEGKACMSPVRRGSGGYGSERMRINCCSIRRNKALRRMCFSARGAVSSTQCVLTSDAGPDTLVRPNHPFRRNYADPNEVAAVILGGGTGTQLFPLTSTRATPAVPIGGCYRLIDIPMSNCFNSGINKIFVMTQFNSASLNRHIHRTYLGGGINFTDGSVEVLAATQMPGEAAGWFQGTADAVRKFIWVLEDYYKHKAIEHILILSGDQLYRMDYMELVQKHVDDNADITLSCAPVGESRASDYGLVKFDSSGRVIQFSEKPKGAALEEMKVDTSFLNFATCTLPAEYPYIASMGVYVFKRDVLLDLLKSRYAELHDFGSEILPKALHEHNVQAYVFTDYWEDIGTIRSFFDANMALCEQPPKFEFYDPKTPFFTSPRYLPPTKSDKCRIKDAIISHGCFLRECAIEHSIVGVPSRLNSGCELKNTMMMGADLYETEDEISRLLAEGKVPIGVGENTKISNCIIDMNCQGWKERLHNKQRGRSKSPDRPGRRILIRSGIVVVLKNATIKDGTVI.

A chloroplast-targeting transit peptide spans 1–47 (MQFSSVLPLEGKACMSPVRRGSGGYGSERMRINCCSIRRNKALRRMC).

Belongs to the bacterial/plant glucose-1-phosphate adenylyltransferase family. As to quaternary structure, heterotetramer. As to expression, abundant in the embryo and is also present in the endosperm.

It is found in the plastid. Its subcellular location is the chloroplast. The protein localises to the amyloplast. The catalysed reaction is alpha-D-glucose 1-phosphate + ATP + H(+) = ADP-alpha-D-glucose + diphosphate. The protein operates within glycan biosynthesis; starch biosynthesis. Activated by 3'phosphoglycerate, inhibited by orthophosphate. Allosteric regulation. Its function is as follows. This protein plays a role in synthesis of starch. It catalyzes the synthesis of the activated glycosyl donor, ADP-glucose from Glc-1-P and ATP. The protein is Glucose-1-phosphate adenylyltransferase large subunit 2, chloroplastic/amyloplastic (AGP2) of Zea mays (Maize).